A 354-amino-acid polypeptide reads, in one-letter code: DNA repair protein rhp57 (354 aa).

Residue 100 to 107 coordinates ATP; the sequence is GESGSGKS.

The protein belongs to the RecA family.

It is found in the nucleus. Its function is as follows. Involved in recombination DNA repair and in the repair of gamma-ray-induced damage. The polypeptide is DNA repair protein rhp57 (rhp57) (Schizosaccharomyces pombe (strain 972 / ATCC 24843) (Fission yeast)).